Here is a 507-residue protein sequence, read N- to C-terminus: tRNA(Ile)-lysidine synthase (507 aa).

24-29 (SGGGDS) contacts ATP. The CMP/dCMP-type deaminase domain maps to 370–500 (PPEEAHMAEA…KLLRDFFARL (131 aa)). Positions 420, 445, and 448 each coordinate Zn(2+).

The protein belongs to the tRNA(Ile)-lysidine synthase family.

The protein resides in the cytoplasm. It carries out the reaction cytidine(34) in tRNA(Ile2) + L-lysine + ATP = lysidine(34) in tRNA(Ile2) + AMP + diphosphate + H(+). Its function is as follows. Ligates lysine onto the cytidine present at position 34 of the AUA codon-specific tRNA(Ile) that contains the anticodon CAU, in an ATP-dependent manner. Cytidine is converted to lysidine, thus changing the amino acid specificity of the tRNA from methionine to isoleucine. The polypeptide is tRNA(Ile)-lysidine synthase (tilS) (Thermus thermophilus (strain ATCC BAA-163 / DSM 7039 / HB27)).